The following is a 392-amino-acid chain: O-phospho-L-seryl-tRNA:Cys-tRNA synthase 1 (392 aa).

Residues 85–86 (AR), Asn-190, and 213–215 (SGH) each bind pyridoxal 5'-phosphate. Lys-216 carries the N6-(pyridoxal phosphate)lysine modification.

The protein belongs to the SepCysS family. Homodimer. Interacts with SepRS. It depends on pyridoxal 5'-phosphate as a cofactor.

It catalyses the reaction O-phospho-L-seryl-tRNA(Cys) + hydrogen sulfide + H(+) = L-cysteinyl-tRNA(Cys) + phosphate. Converts O-phospho-L-seryl-tRNA(Cys) (Sep-tRNA(Cys)) to L-cysteinyl-tRNA(Cys) (Cys-tRNA(Cys)). This is O-phospho-L-seryl-tRNA:Cys-tRNA synthase 1 from Methanoregula boonei (strain DSM 21154 / JCM 14090 / 6A8).